Here is an 85-residue protein sequence, read N- to C-terminus: Beta-toxin BmKAS (85 aa).

Positions 1 to 19 are cleaved as a signal peptide; the sequence is MKTVIFLIVSSLLLIGVKT. The 63-residue stretch at 20–82 folds into the LCN-type CS-alpha/beta domain; sequence DNGYLLDKYT…LWNYNTNKCN (63 aa). Intrachain disulfides connect Cys-31/Cys-81, Cys-35/Cys-56, Cys-42/Cys-63, and Cys-46/Cys-65.

As to expression, expressed by the venom gland.

The protein resides in the secreted. In terms of biological role, beta toxins bind voltage-independently at site-4 of sodium channels (Nav) and shift the voltage of activation toward more negative potentials thereby affecting sodium channel activation and promoting spontaneous and repetitive firing. It binds to distinct receptor sites of mammal and insect voltage-gated sodium channels. It displays antinociceptive effect in rat models, which is due to its specific modulation of sodium channels of sensory neurons. It also significantly stimulates the binding of [3H]-ryanodine to ryanodine receptors on the sarcoplasmic reticulum of the skeletal muscle through an indirect mechanism. And it promotes noradrenaline release from the rat hippocampus slice. The sequence is that of Beta-toxin BmKAS from Olivierus martensii (Manchurian scorpion).